Consider the following 404-residue polypeptide: uncharacterized protein (404 aa).

2 helical membrane passes run Ile-35 to Leu-55 and Glu-92 to Ile-112.

The protein localises to the membrane. This is an uncharacterized protein from Saccharomyces cerevisiae (strain ATCC 204508 / S288c) (Baker's yeast).